Consider the following 60-residue polypeptide: Cytotoxin 2 (60 aa).

4 cysteine pairs are disulfide-bonded: Cys3–Cys21, Cys14–Cys38, Cys42–Cys53, and Cys54–Cys59.

Belongs to the three-finger toxin family. Short-chain subfamily. Type IA cytotoxin sub-subfamily. As to quaternary structure, monomer in solution; Homodimer and oligomer in the presence of negatively charged lipids forming a pore with a size ranging between 20 and 30 Angstroms. As to expression, expressed by the venom gland.

It localises to the secreted. The protein resides in the target cell membrane. Functionally, shows cytolytic activity on many different cells by forming pore in lipid membranes. In vivo, increases heart rate or kills the animal by cardiac arrest. In addition, it binds to heparin with high affinity, interacts with Kv channel-interacting protein 1 (KCNIP1) in a calcium-independent manner, and binds to integrin alpha-V/beta-3 (ITGAV/ITGB3) with moderate affinity. The protein is Cytotoxin 2 of Naja annulifera (Banded Egyptian cobra).